The following is a 66-amino-acid chain: Large ribosomal subunit protein uL29 (66 aa).

The protein belongs to the universal ribosomal protein uL29 family.

In Agrobacterium fabrum (strain C58 / ATCC 33970) (Agrobacterium tumefaciens (strain C58)), this protein is Large ribosomal subunit protein uL29.